Consider the following 351-residue polypeptide: Phenylacetaldoxime dehydratase (351 aa).

It belongs to the heme-containing dehydratase family. Monomer. Heme b serves as cofactor.

The enzyme catalyses (Z)-phenylacetaldehyde oxime = phenylacetonitrile + H2O. Functionally, catalyzes the stoichiometric dehydration of Z-phenylacetaldoxime to phenylacetonitrile. Prefers the Z-form of phenylacetaldoxime over its E-isomer. The sequence is that of Phenylacetaldoxime dehydratase from Bacillus sp. (strain OxB-1).